Here is a 222-residue protein sequence, read N- to C-terminus: N-(5'-phosphoribosyl)anthranilate isomerase (222 aa).

This sequence belongs to the TrpF family.

It catalyses the reaction N-(5-phospho-beta-D-ribosyl)anthranilate = 1-(2-carboxyphenylamino)-1-deoxy-D-ribulose 5-phosphate. The protein operates within amino-acid biosynthesis; L-tryptophan biosynthesis; L-tryptophan from chorismate: step 3/5. The chain is N-(5'-phosphoribosyl)anthranilate isomerase from Xanthomonas euvesicatoria pv. vesicatoria (strain 85-10) (Xanthomonas campestris pv. vesicatoria).